The following is a 430-amino-acid chain: RNA-binding protein 34 (430 aa).

3 disordered regions span residues 1-55 (MALE…GTGR), 72-123 (VPVP…ADRE), and 134-153 (EIHQKQGQKRKNSQPGVKVA). Phosphoserine is present on residues Ser14, Ser28, and Ser99. A compositionally biased stretch (basic and acidic residues) spans 23-34 (DGVRGSPPEDYR). A compositionally biased stretch (basic and acidic residues) spans 113 to 123 (TNAEKKLADRE). Residue Lys151 is modified to N6-acetyllysine. 2 RRM domains span residues 185–280 (RTVF…LASE) and 287–364 (RSVF…RSVN). Lys242 participates in a covalent cross-link: Glycyl lysine isopeptide (Lys-Gly) (interchain with G-Cter in SUMO2). Ser288 bears the Phosphoserine mark. 2 disordered regions span residues 365-395 (KEKFKQQNSNPRLKNVSKPKQGLNFTSKTAE) and 411-430 (KTKKKGQKKSGRPKKQRKQK).

This sequence belongs to the RRM RBM34 family.

It is found in the nucleus. The protein resides in the nucleolus. The polypeptide is RNA-binding protein 34 (RBM34) (Homo sapiens (Human)).